The primary structure comprises 692 residues: Elongation factor G (692 aa).

One can recognise a tr-type G domain in the interval 8–282; the sequence is ENTRNIGIMA…GVVDYLPSPL (275 aa). Residues 17–24, 81–85, and 135–138 each bind GTP; these read AHIDAGKT, DTPGH, and NKMD.

The protein belongs to the TRAFAC class translation factor GTPase superfamily. Classic translation factor GTPase family. EF-G/EF-2 subfamily.

The protein localises to the cytoplasm. In terms of biological role, catalyzes the GTP-dependent ribosomal translocation step during translation elongation. During this step, the ribosome changes from the pre-translocational (PRE) to the post-translocational (POST) state as the newly formed A-site-bound peptidyl-tRNA and P-site-bound deacylated tRNA move to the P and E sites, respectively. Catalyzes the coordinated movement of the two tRNA molecules, the mRNA and conformational changes in the ribosome. The polypeptide is Elongation factor G (Geobacillus thermodenitrificans (strain NG80-2)).